A 1083-amino-acid chain; its full sequence is DNA-directed RNA polymerase subunit beta (1083 aa).

The protein belongs to the RNA polymerase beta chain family. As to quaternary structure, in plastids the minimal PEP RNA polymerase catalytic core is composed of four subunits: alpha, beta, beta', and beta''. When a (nuclear-encoded) sigma factor is associated with the core the holoenzyme is formed, which can initiate transcription.

It is found in the plastid. Its subcellular location is the chloroplast. The catalysed reaction is RNA(n) + a ribonucleoside 5'-triphosphate = RNA(n+1) + diphosphate. DNA-dependent RNA polymerase catalyzes the transcription of DNA into RNA using the four ribonucleoside triphosphates as substrates. The polypeptide is DNA-directed RNA polymerase subunit beta (Acorus calamus var. americanus (American sweet flag)).